A 762-amino-acid chain; its full sequence is Primary amine oxidase, liver isozyme (762 aa).

Positions 1 to 16 are cleaved as a signal peptide; sequence MFIFIFLSLWTLLVMG. The disordered stretch occupies residues 23–54; that stretch reads GSEEGVGKQCHPSLPPRCPSRSPSDQPWTHPD. N-linked (GlcNAc...) asparagine glycosylation occurs at Asn136. Cysteines 197 and 198 form a disulfide. N-linked (GlcNAc...) asparagine glycosylation is present at Asn231. Residue 383-393 participates in substrate binding; the sequence is YMDSGFGMGYF. Asp385 (proton acceptor) is an active-site residue. An intrachain disulfide couples Cys403 to Cys429. Residue 467–472 coordinates substrate; the sequence is MLNYDY. The Schiff-base intermediate with substrate; via topaquinone role is filled by Tyr470. At Tyr470 the chain carries 2',4',5'-topaquinone. The Cu cation site is built by His519 and His521. Positions 528, 529, 530, 571, 662, and 664 each coordinate Ca(2+). Asn665 carries an N-linked (GlcNAc...) asparagine glycan. The Ca(2+) site is built by Glu666, Asp672, and Leu673. His683 serves as a coordination point for Cu cation. Cys733 and Cys740 are joined by a disulfide.

The protein belongs to the copper/topaquinone oxidase family. As to quaternary structure, homodimer; disulfide-linked. The cofactor is Cu cation. Ca(2+) serves as cofactor. L-topaquinone is required as a cofactor. Topaquinone (TPQ) is generated by copper-dependent autoxidation of a specific tyrosyl residue. In terms of tissue distribution, liver.

The protein resides in the secreted. It localises to the extracellular space. The enzyme catalyses a primary methyl amine + O2 + H2O = an aldehyde + H2O2 + NH4(+). In Bos taurus (Bovine), this protein is Primary amine oxidase, liver isozyme.